The chain runs to 342 residues: Cell division protein ZipA (342 aa).

Topologically, residues methionine 1 to leucine 6 are periplasmic. The helical transmembrane segment at valine 7–isoleucine 27 threads the bilayer. The Cytoplasmic segment spans residues arginine 28–alanine 342. Residues lysine 33–valine 57 form a disordered region. The segment covering glutamine 47–valine 57 has biased composition (basic and acidic residues).

This sequence belongs to the ZipA family. Interacts with FtsZ via their C-terminal domains.

It localises to the cell inner membrane. Its function is as follows. Essential cell division protein that stabilizes the FtsZ protofilaments by cross-linking them and that serves as a cytoplasmic membrane anchor for the Z ring. Also required for the recruitment to the septal ring of downstream cell division proteins. The protein is Cell division protein ZipA of Shewanella putrefaciens (strain CN-32 / ATCC BAA-453).